The following is a 181-amino-acid chain: ATP synthase subunit delta (181 aa).

It belongs to the ATPase delta chain family. F-type ATPases have 2 components, F(1) - the catalytic core - and F(0) - the membrane proton channel. F(1) has five subunits: alpha(3), beta(3), gamma(1), delta(1), epsilon(1). F(0) has three main subunits: a(1), b(2) and c(10-14). The alpha and beta chains form an alternating ring which encloses part of the gamma chain. F(1) is attached to F(0) by a central stalk formed by the gamma and epsilon chains, while a peripheral stalk is formed by the delta and b chains.

Its subcellular location is the cell inner membrane. F(1)F(0) ATP synthase produces ATP from ADP in the presence of a proton or sodium gradient. F-type ATPases consist of two structural domains, F(1) containing the extramembraneous catalytic core and F(0) containing the membrane proton channel, linked together by a central stalk and a peripheral stalk. During catalysis, ATP synthesis in the catalytic domain of F(1) is coupled via a rotary mechanism of the central stalk subunits to proton translocation. In terms of biological role, this protein is part of the stalk that links CF(0) to CF(1). It either transmits conformational changes from CF(0) to CF(1) or is implicated in proton conduction. This Hyphomonas neptunium (strain ATCC 15444) protein is ATP synthase subunit delta.